We begin with the raw amino-acid sequence, 106 residues long: ATP-dependent Clp protease adapter protein ClpS (106 aa).

This sequence belongs to the ClpS family. Binds to the N-terminal domain of the chaperone ClpA.

Involved in the modulation of the specificity of the ClpAP-mediated ATP-dependent protein degradation. This chain is ATP-dependent Clp protease adapter protein ClpS, found in Photobacterium profundum (strain SS9).